Consider the following 672-residue polypeptide: COBRA-like protein 10 (672 aa).

A signal peptide spans 1 to 35 (MRAIDVKTGMKIPWDVRYSLSLFIFLSSILFLSNG). N-linked (GlcNAc...) asparagine glycans are attached at residues Asn-79, Asn-135, Asn-264, Asn-328, Asn-339, Asn-368, Asn-422, Asn-442, Asn-483, Asn-562, Asn-570, and Asn-589. The 106-residue stretch at 502–607 (KLPCPDNCGV…PVPGKQQSVI (106 aa)) folds into the CBM2 domain. Ser-646 is lipidated: GPI-anchor amidated serine. The propeptide at 647-672 (SGHRRGISVSMSFVFATIAAFALMMD) is removed in mature form. The Required for processing by the PIG complex, a critical step for apical plasma membrane localization in pollen tubes motif lies at 664 to 672 (IAAFALMMD).

The protein belongs to the COBRA family. The GPI-anchor attachment at Ser-646 requires APTG1. As to expression, expressed in roots, stems, leaves, flowers and siliques. Specific expression in the pollen tube.

The protein resides in the cell membrane. Its subcellular location is the cytoplasm. The protein localises to the vesicle. Its function is as follows. Involved in the deposition of apical pectin cap and cellulose microfibrils in pollen tubes. Not essential for pollen development, hydration or germination, but required for pollen tubes growth in the female transmitting tract of pistil and toward micropyles, via the perception of ovule guidance cues. The protein is COBRA-like protein 10 of Arabidopsis thaliana (Mouse-ear cress).